A 183-amino-acid chain; its full sequence is MQMDWLFIAVISGIGLLSSGVPGTQGAYTTEQCRALNGSCNFYACFPKNVIIGKCDWWGWSCCARTPLERCTAKKGTCTKTGCTKTDTDHGPCDGGAQCCQRDPVKYCKFHGNVCGRGKCPMDHIPIGEQCMPGYPCCKRDGPAYCKSKGGKCLRRCSQIVPTDIIGVCADGVPCCKSRQSTG.

Residues 1 to 26 form the signal peptide; sequence MQMDWLFIAVISGIGLLSSGVPGTQG. The C(6)C(4)C(9)C(6)CC 1; approximate repeat unit spans residues 27 to 64; that stretch reads AYTTEQCRALNGSCNFYACFPKNVIIGKCDWWGWSCCA. Residues 65-101 form a C(6)C(4)C(9)C(6)CC 2; approximate repeat; it reads RTPLERCTAKKGTCTKTGCTKTDTDHGPCDGGAQCCQ. Residues 102 to 139 form a C(6)C(4)C(9)C(6)CC 3; approximate repeat; the sequence is RDPVKYCKFHGNVCGRGKCPMDHIPIGEQCMPGYPCCK. The stretch at 140-177 is one C(6)C(4)C(9)C(6)CC 4; approximate repeat; it reads RDGPAYCKSKGGKCLRRCSQIVPTDIIGVCADGVPCCK.

The protein belongs to the beta-defensin family. Helofensin subfamily. As to expression, expressed by the mandibular venom gland.

Its subcellular location is the secreted. Functionally, lethal toxin which possesses an inhibitory effect on direct electrical stimulation of the isolated hemi-diaphragm of mice. Neither hemorrhagic nor hemolytic activities are detected. Phospholipase A2 activity, proteolytic activity and arginine esterolytic activity are absent. The polypeptide is Helofensin-2 (Heloderma suspectum cinctum (Banded Gila monster)).